The chain runs to 345 residues: GTPase Obg (345 aa).

Residues 1-159 enclose the Obg domain; the sequence is MKFIDEAIIK…RTLRLELKLL (159 aa). The disordered stretch occupies residues 127-148; the sequence is NARFKSSTNRAPRKTTQGKPGE. The segment covering 130–144 has biased composition (polar residues); that stretch reads FKSSTNRAPRKTTQG. The OBG-type G domain occupies 160–334; that stretch reads ADVGLLGLPN…LIHAVMQYLE (175 aa). GTP-binding positions include 166–173, 191–195, 213–216, 284–287, and 315–317; these read GLPNAGKS, FTTLH, DIPG, NKTD, and SAL. Residues Ser-173 and Thr-193 each contribute to the Mg(2+) site.

The protein belongs to the TRAFAC class OBG-HflX-like GTPase superfamily. OBG GTPase family. As to quaternary structure, monomer. The cofactor is Mg(2+).

The protein localises to the cytoplasm. Functionally, an essential GTPase which binds GTP, GDP and possibly (p)ppGpp with moderate affinity, with high nucleotide exchange rates and a fairly low GTP hydrolysis rate. Plays a role in control of the cell cycle, stress response, ribosome biogenesis and in those bacteria that undergo differentiation, in morphogenesis control. In Nitrosococcus oceani (strain ATCC 19707 / BCRC 17464 / JCM 30415 / NCIMB 11848 / C-107), this protein is GTPase Obg.